The sequence spans 354 residues: D-alanine--D-alanine ligase (354 aa).

The ATP-grasp domain maps to 140–344 (KRLLRDSGLS…ISTLLTRLIM (205 aa)). Residue 170–225 (ADMFGLPFFVKPVNQGSSIGVAKVNDDYSFHSALDIAFFYSHKIIIESCIAGRELE) participates in ATP binding. The Mg(2+) site is built by Asp298, Glu311, and Asn313.

The protein belongs to the D-alanine--D-alanine ligase family. Requires Mg(2+) as cofactor. It depends on Mn(2+) as a cofactor.

It is found in the cytoplasm. The enzyme catalyses 2 D-alanine + ATP = D-alanyl-D-alanine + ADP + phosphate + H(+). It functions in the pathway cell wall biogenesis; peptidoglycan biosynthesis. In terms of biological role, cell wall formation. This chain is D-alanine--D-alanine ligase, found in Blochmanniella floridana.